The following is a 475-amino-acid chain: UDP-N-acetylmuramate--L-alanine ligase (475 aa).

Residue 125-131 (GTHGKTT) participates in ATP binding.

This sequence belongs to the MurCDEF family.

The protein resides in the cytoplasm. It catalyses the reaction UDP-N-acetyl-alpha-D-muramate + L-alanine + ATP = UDP-N-acetyl-alpha-D-muramoyl-L-alanine + ADP + phosphate + H(+). It participates in cell wall biogenesis; peptidoglycan biosynthesis. Functionally, cell wall formation. The protein is UDP-N-acetylmuramate--L-alanine ligase of Haemophilus influenzae (strain PittGG).